A 162-amino-acid chain; its full sequence is UPF0303 protein Arad_3071 (162 aa).

This sequence belongs to the UPF0303 family.

The chain is UPF0303 protein Arad_3071 from Rhizobium rhizogenes (strain K84 / ATCC BAA-868) (Agrobacterium radiobacter).